We begin with the raw amino-acid sequence, 369 residues long: GTPase Obg (369 aa).

The Obg domain maps to 1 to 159 (MKFVDEVTID…KNLKLELRVL (159 aa)). Positions 160-334 (ADVGLLGMPN…LIHAIYSHVA (175 aa)) constitute an OBG-type G domain. GTP is bound by residues 166 to 173 (GMPNAGKS), 191 to 195 (FTTLH), 213 to 216 (DIPG), 284 to 287 (NKLD), and 315 to 317 (SAL). The Mg(2+) site is built by S173 and T193. The disordered stretch occupies residues 339–369 (QPEEVPDPRFTTNEDLSEAAPAPDRDDPRFR).

This sequence belongs to the TRAFAC class OBG-HflX-like GTPase superfamily. OBG GTPase family. Monomer. Mg(2+) is required as a cofactor.

Its subcellular location is the cytoplasm. In terms of biological role, an essential GTPase which binds GTP, GDP and possibly (p)ppGpp with moderate affinity, with high nucleotide exchange rates and a fairly low GTP hydrolysis rate. Plays a role in control of the cell cycle, stress response, ribosome biogenesis and in those bacteria that undergo differentiation, in morphogenesis control. The polypeptide is GTPase Obg (Leptothrix cholodnii (strain ATCC 51168 / LMG 8142 / SP-6) (Leptothrix discophora (strain SP-6))).